Here is a 342-residue protein sequence, read N- to C-terminus: Ferredoxin--NADP reductase (342 aa).

8 residues coordinate FAD: Cys-17, Asp-36, Gln-44, Tyr-49, Ile-89, Phe-124, Asp-289, and Thr-330.

It belongs to the ferredoxin--NADP reductase type 2 family. As to quaternary structure, homodimer. FAD is required as a cofactor.

The enzyme catalyses 2 reduced [2Fe-2S]-[ferredoxin] + NADP(+) + H(+) = 2 oxidized [2Fe-2S]-[ferredoxin] + NADPH. This is Ferredoxin--NADP reductase from Rhodopseudomonas palustris (strain BisB5).